Here is a 427-residue protein sequence, read N- to C-terminus: Phosphoribosylamine--glycine ligase (427 aa).

The ATP-grasp domain maps to 110 to 315; it reads KDFCQRHGLP…IVPILLAAAK (206 aa). Position 136 to 196 (136 to 196) interacts with ATP; it reads LDTLEAPFVI…EEFMHGEEAS (61 aa). Mg(2+)-binding residues include glutamate 285 and asparagine 287.

The protein belongs to the GARS family. It depends on Mg(2+) as a cofactor. Requires Mn(2+) as cofactor.

It carries out the reaction 5-phospho-beta-D-ribosylamine + glycine + ATP = N(1)-(5-phospho-beta-D-ribosyl)glycinamide + ADP + phosphate + H(+). Its pathway is purine metabolism; IMP biosynthesis via de novo pathway; N(1)-(5-phospho-D-ribosyl)glycinamide from 5-phospho-alpha-D-ribose 1-diphosphate: step 2/2. In Caulobacter vibrioides (strain ATCC 19089 / CIP 103742 / CB 15) (Caulobacter crescentus), this protein is Phosphoribosylamine--glycine ligase.